We begin with the raw amino-acid sequence, 182 residues long: Segregation and condensation protein B (182 aa).

It belongs to the ScpB family. Homodimer. Homodimerization may be required to stabilize the binding of ScpA to the Smc head domains. Component of a cohesin-like complex composed of ScpA, ScpB and the Smc homodimer, in which ScpA and ScpB bind to the head domain of Smc. The presence of the three proteins is required for the association of the complex with DNA.

Its subcellular location is the cytoplasm. Functionally, participates in chromosomal partition during cell division. May act via the formation of a condensin-like complex containing Smc and ScpA that pull DNA away from mid-cell into both cell halves. The sequence is that of Segregation and condensation protein B from Staphylococcus saprophyticus subsp. saprophyticus (strain ATCC 15305 / DSM 20229 / NCIMB 8711 / NCTC 7292 / S-41).